The chain runs to 86 residues: Electron transfer flavoprotein regulatory factor 1 (86 aa).

Belongs to the complex I LYR family.

Its subcellular location is the mitochondrion. Its function is as follows. Acts as a regulator of the electron transfer flavoprotein by promoting the removal of flavin from the ETF holoenzyme (composed of ETFA and ETFB). In Taeniopygia guttata (Zebra finch), this protein is Electron transfer flavoprotein regulatory factor 1.